Reading from the N-terminus, the 210-residue chain is 3-hexulose-6-phosphate synthase (210 aa).

It belongs to the HPS/KGPDC family. HPS subfamily.

The enzyme catalyses D-ribulose 5-phosphate + formaldehyde = D-arabino-hex-3-ulose 6-phosphate. The protein operates within one-carbon metabolism; formaldehyde assimilation via RuMP pathway; D-fructose 6-phosphate from D-ribulose 5-phosphate and formaldehyde: step 1/2. Its function is as follows. Catalyzes the condensation of ribulose 5-phosphate with formaldehyde to form 3-hexulose 6-phosphate. In Staphylococcus aureus (strain USA300), this protein is 3-hexulose-6-phosphate synthase.